The chain runs to 189 residues: Elongation factor P (189 aa).

It belongs to the elongation factor P family.

It is found in the cytoplasm. Its pathway is protein biosynthesis; polypeptide chain elongation. Involved in peptide bond synthesis. Stimulates efficient translation and peptide-bond synthesis on native or reconstituted 70S ribosomes in vitro. Probably functions indirectly by altering the affinity of the ribosome for aminoacyl-tRNA, thus increasing their reactivity as acceptors for peptidyl transferase. The polypeptide is Elongation factor P (Ehrlichia canis (strain Jake)).